Consider the following 107-residue polypeptide: Nucleoid-associated protein Mlg_1509 (107 aa).

It belongs to the YbaB/EbfC family. As to quaternary structure, homodimer.

It is found in the cytoplasm. The protein localises to the nucleoid. In terms of biological role, binds to DNA and alters its conformation. May be involved in regulation of gene expression, nucleoid organization and DNA protection. This Alkalilimnicola ehrlichii (strain ATCC BAA-1101 / DSM 17681 / MLHE-1) protein is Nucleoid-associated protein Mlg_1509.